Reading from the N-terminus, the 296-residue chain is tRNA pseudouridine synthase B (296 aa).

Residue Asp-38 is the Nucleophile of the active site.

The protein belongs to the pseudouridine synthase TruB family. Type 1 subfamily.

The enzyme catalyses uridine(55) in tRNA = pseudouridine(55) in tRNA. Responsible for synthesis of pseudouridine from uracil-55 in the psi GC loop of transfer RNAs. The polypeptide is tRNA pseudouridine synthase B (Synechocystis sp. (strain ATCC 27184 / PCC 6803 / Kazusa)).